We begin with the raw amino-acid sequence, 285 residues long: Putative ABC transporter ATP-binding protein CPE0195 (285 aa).

The region spanning 6-242 (LKVEELNYNY…KEVIRKVNLR (237 aa)) is the ABC transporter domain. ATP is bound at residue 39–46 (GGNGVGKS).

It belongs to the ABC transporter superfamily.

Its subcellular location is the cell membrane. In terms of biological role, probably part of an ABC transporter complex. Responsible for energy coupling to the transport system. The protein is Putative ABC transporter ATP-binding protein CPE0195 of Clostridium perfringens (strain 13 / Type A).